The chain runs to 223 residues: Glutathione S-transferase alpha I (223 aa).

Position 1 is an N-acetylmethionine (Met1). N-acetylalanine; in Glutathione S-transferase alpha I, N-terminally processed is present on Ala2. The GST N-terminal domain occupies 3 to 83 (RKPLLHYFNG…YVANKHNLYG (81 aa)). At Lys4 the chain carries N6-succinyllysine. Residues Tyr9, Arg45, 54-55 (QV), and 67-68 (QT) each bind glutathione. Residues 85-208 (DMKERALIDM…QPGSQRKPPM (124 aa)) form the GST C-terminal domain.

The protein belongs to the GST superfamily. Alpha family. Homodimer or heterodimer of GSTA1 and GSTA2. In terms of tissue distribution, liver and lung.

The protein resides in the cytoplasm. The catalysed reaction is RX + glutathione = an S-substituted glutathione + a halide anion + H(+). It carries out the reaction prostaglandin A2 + glutathione = prostaglandin A2-S-(R)-glutathione. The enzyme catalyses prostaglandin J2 + glutathione = prostaglandin J2-S-(R)-glutathione. It catalyses the reaction (13S)-hydroperoxy-(9Z,11E)-octadecadienoate + 2 glutathione = (13S)-hydroxy-(9Z,11E)-octadecadienoate + glutathione disulfide + H2O. The catalysed reaction is androst-5-ene-3,17-dione = androst-4-ene-3,17-dione. In terms of biological role, glutathione S-transferase that catalyzes the nucleophilic attack of the sulfur atom of glutathione on the electrophilic groups of a wide range of exogenous and endogenous compounds. Involved in the formation of glutathione conjugates of both prostaglandin A2 (PGA2) and prostaglandin J2 (PGJ2). It also catalyzes the isomerization of D5-androstene-3,17-dione (AD) into D4-androstene-3,17-dione and may therefore play an important role in hormone biosynthesis. Through its glutathione-dependent peroxidase activity toward the fatty acid hydroperoxide (13S)-hydroperoxy-(9Z,11E)-octadecadienoate/13-HPODE it is also involved in the metabolism of oxidized linoleic acid. The polypeptide is Glutathione S-transferase alpha I (Oryctolagus cuniculus (Rabbit)).